Consider the following 119-residue polypeptide: Large ribosomal subunit protein uL14 (119 aa).

Belongs to the universal ribosomal protein uL14 family. Part of the 50S ribosomal subunit. Forms a cluster with proteins L3 and L19. In the 70S ribosome, L14 and L19 interact and together make contacts with the 16S rRNA in bridges B5 and B8.

Binds to 23S rRNA. Forms part of two intersubunit bridges in the 70S ribosome. This Anaplasma marginale (strain St. Maries) protein is Large ribosomal subunit protein uL14.